The following is a 302-amino-acid chain: Putative thiol protease R355 (302 aa).

Residues H182 and D199 contribute to the active site. The active-site Nucleophile is C244.

It belongs to the peptidase C48 family.

It is found in the virion. In Acanthamoeba polyphaga mimivirus (APMV), this protein is Putative thiol protease R355.